A 157-amino-acid polypeptide reads, in one-letter code: 2-C-methyl-D-erythritol 2,4-cyclodiphosphate synthase (157 aa).

A divalent metal cation is bound by residues Asp-8 and His-10. 4-CDP-2-C-methyl-D-erythritol 2-phosphate is bound by residues 8-10 and 34-35; these read DVH and HS. An a divalent metal cation-binding site is contributed by His-42. Residues 56 to 58, 61 to 65, 100 to 106, 132 to 135, Phe-139, and Arg-142 each bind 4-CDP-2-C-methyl-D-erythritol 2-phosphate; these read DIG, FPDTD, AQAPKMA, and TTTE.

It belongs to the IspF family. In terms of assembly, homotrimer. A divalent metal cation serves as cofactor.

The enzyme catalyses 4-CDP-2-C-methyl-D-erythritol 2-phosphate = 2-C-methyl-D-erythritol 2,4-cyclic diphosphate + CMP. It participates in isoprenoid biosynthesis; isopentenyl diphosphate biosynthesis via DXP pathway; isopentenyl diphosphate from 1-deoxy-D-xylulose 5-phosphate: step 4/6. Involved in the biosynthesis of isopentenyl diphosphate (IPP) and dimethylallyl diphosphate (DMAPP), two major building blocks of isoprenoid compounds. Catalyzes the conversion of 4-diphosphocytidyl-2-C-methyl-D-erythritol 2-phosphate (CDP-ME2P) to 2-C-methyl-D-erythritol 2,4-cyclodiphosphate (ME-CPP) with a corresponding release of cytidine 5-monophosphate (CMP). The sequence is that of 2-C-methyl-D-erythritol 2,4-cyclodiphosphate synthase from Serratia proteamaculans (strain 568).